Here is a 297-residue protein sequence, read N- to C-terminus: N-acetylmuramic acid 6-phosphate etherase (297 aa).

The SIS domain occupies Ala-56–Lys-219. The active-site Proton donor is Glu-84. Glu-115 is an active-site residue.

This sequence belongs to the GCKR-like family. MurNAc-6-P etherase subfamily. In terms of assembly, homodimer.

It carries out the reaction N-acetyl-D-muramate 6-phosphate + H2O = N-acetyl-D-glucosamine 6-phosphate + (R)-lactate. It functions in the pathway amino-sugar metabolism; N-acetylmuramate degradation. Its function is as follows. Specifically catalyzes the cleavage of the D-lactyl ether substituent of MurNAc 6-phosphate, producing GlcNAc 6-phosphate and D-lactate. The polypeptide is N-acetylmuramic acid 6-phosphate etherase (Lactococcus lactis subsp. lactis (strain IL1403) (Streptococcus lactis)).